Reading from the N-terminus, the 306-residue chain is 4-hydroxy-3-methylbut-2-enyl diphosphate reductase (306 aa).

Position 12 (cysteine 12) interacts with [4Fe-4S] cluster. Positions 41 and 74 each coordinate (2E)-4-hydroxy-3-methylbut-2-enyl diphosphate. Histidine 41 and histidine 74 together coordinate dimethylallyl diphosphate. 2 residues coordinate isopentenyl diphosphate: histidine 41 and histidine 74. Cysteine 96 lines the [4Fe-4S] cluster pocket. Residue histidine 124 coordinates (2E)-4-hydroxy-3-methylbut-2-enyl diphosphate. Histidine 124 contacts dimethylallyl diphosphate. Histidine 124 serves as a coordination point for isopentenyl diphosphate. Catalysis depends on glutamate 126, which acts as the Proton donor. (2E)-4-hydroxy-3-methylbut-2-enyl diphosphate is bound at residue threonine 164. Cysteine 194 serves as a coordination point for [4Fe-4S] cluster. 4 residues coordinate (2E)-4-hydroxy-3-methylbut-2-enyl diphosphate: serine 222, serine 223, asparagine 224, and serine 266. Dimethylallyl diphosphate contacts are provided by serine 222, serine 223, asparagine 224, and serine 266. Serine 222, serine 223, asparagine 224, and serine 266 together coordinate isopentenyl diphosphate.

The protein belongs to the IspH family. [4Fe-4S] cluster serves as cofactor.

The catalysed reaction is isopentenyl diphosphate + 2 oxidized [2Fe-2S]-[ferredoxin] + H2O = (2E)-4-hydroxy-3-methylbut-2-enyl diphosphate + 2 reduced [2Fe-2S]-[ferredoxin] + 2 H(+). The enzyme catalyses dimethylallyl diphosphate + 2 oxidized [2Fe-2S]-[ferredoxin] + H2O = (2E)-4-hydroxy-3-methylbut-2-enyl diphosphate + 2 reduced [2Fe-2S]-[ferredoxin] + 2 H(+). It participates in isoprenoid biosynthesis; dimethylallyl diphosphate biosynthesis; dimethylallyl diphosphate from (2E)-4-hydroxy-3-methylbutenyl diphosphate: step 1/1. Its pathway is isoprenoid biosynthesis; isopentenyl diphosphate biosynthesis via DXP pathway; isopentenyl diphosphate from 1-deoxy-D-xylulose 5-phosphate: step 6/6. Its function is as follows. Catalyzes the conversion of 1-hydroxy-2-methyl-2-(E)-butenyl 4-diphosphate (HMBPP) into a mixture of isopentenyl diphosphate (IPP) and dimethylallyl diphosphate (DMAPP). Acts in the terminal step of the DOXP/MEP pathway for isoprenoid precursor biosynthesis. In Ruthia magnifica subsp. Calyptogena magnifica, this protein is 4-hydroxy-3-methylbut-2-enyl diphosphate reductase.